A 175-amino-acid polypeptide reads, in one-letter code: Protein LAZY 3 (175 aa).

Positions 9 to 39 are disordered; it reads RKLSGKKRVPTSDSSQEPSSPPLSKEVQGLP. Positions 44 to 50 match the IGT motif motif; sequence TFLAIGT.

Belongs to the LAZY family. As to expression, specifically expressed in roots. Expressed in root tips of young seedlings.

In terms of biological role, involved in the regulation of root gravitropism. Functions redundantly with LAZY2 and LAZY4 in the control of root gravitropism. Functions redundantly with LAZY1, LAZY2 and LAZY4 to control plant architecture by coupling gravity sensing to the formation of auxin gradients. In Arabidopsis thaliana (Mouse-ear cress), this protein is Protein LAZY 3.